A 205-amino-acid chain; its full sequence is MTKRSEAKYKIDRRMGQNIWGRPKSPVNRREYGPGQHGQRRKGKLSDFGVQLRAKQKLKGYYANISERQFHGIYVEAGRLKGDTGENLIGILERRLDTVVFRAKFVSTMFAARQFINHGHIKVNGRKVNIASYQVKPGDVIEVKEASKQLAIVLEATQLAERDVPDYIEADHSKMTAKFIRIPALSDVPFAVQMEPHLIVEFYSR.

The interval 18 to 46 is disordered; the sequence is NIWGRPKSPVNRREYGPGQHGQRRKGKLS. The S4 RNA-binding domain occupies 94–157; that stretch reads RRLDTVVFRA…KQLAIVLEAT (64 aa).

Belongs to the universal ribosomal protein uS4 family. As to quaternary structure, part of the 30S ribosomal subunit. Contacts protein S5. The interaction surface between S4 and S5 is involved in control of translational fidelity.

In terms of biological role, one of the primary rRNA binding proteins, it binds directly to 16S rRNA where it nucleates assembly of the body of the 30S subunit. Its function is as follows. With S5 and S12 plays an important role in translational accuracy. This chain is Small ribosomal subunit protein uS4, found in Bradyrhizobium sp. (strain BTAi1 / ATCC BAA-1182).